The following is a 720-amino-acid chain: Nucleoporin 88 (720 aa).

Residues 584–611 are a coiled coil; it reads LALCREDRKSLTEAAERLADKYEDAKYR.

In terms of tissue distribution, widely expressed. Higher levels of expression are detected in highly proliferative frontal regions of the embryo, e.g. brain, eye and anterior trunk.

It localises to the nucleus. The protein localises to the nuclear pore complex. Its function is as follows. Component of the nuclear pore complex. This is Nucleoporin 88 from Danio rerio (Zebrafish).